Here is a 201-residue protein sequence, read N- to C-terminus: Probable chemoreceptor glutamine deamidase CheD 2 (201 aa).

This sequence belongs to the CheD family.

The catalysed reaction is L-glutaminyl-[protein] + H2O = L-glutamyl-[protein] + NH4(+). Probably deamidates glutamine residues to glutamate on methyl-accepting chemotaxis receptors (MCPs), playing an important role in chemotaxis. The chain is Probable chemoreceptor glutamine deamidase CheD 2 from Chromobacterium violaceum (strain ATCC 12472 / DSM 30191 / JCM 1249 / CCUG 213 / NBRC 12614 / NCIMB 9131 / NCTC 9757 / MK).